The chain runs to 247 residues: Carboxy-S-adenosyl-L-methionine synthase (247 aa).

Residues Tyr-39, 64–66 (GCS), 89–90 (DN), 117–118 (DI), Asn-132, and Arg-199 each bind S-adenosyl-L-methionine.

Belongs to the class I-like SAM-binding methyltransferase superfamily. Cx-SAM synthase family. As to quaternary structure, homodimer.

The catalysed reaction is prephenate + S-adenosyl-L-methionine = carboxy-S-adenosyl-L-methionine + 3-phenylpyruvate + H2O. Its function is as follows. Catalyzes the conversion of S-adenosyl-L-methionine (SAM) to carboxy-S-adenosyl-L-methionine (Cx-SAM). The protein is Carboxy-S-adenosyl-L-methionine synthase of Pectobacterium atrosepticum (strain SCRI 1043 / ATCC BAA-672) (Erwinia carotovora subsp. atroseptica).